The following is a 196-amino-acid chain: Lipoprotein signal peptidase (196 aa).

The next 3 helical transmembrane spans lie at Ser-17–Leu-37, Ser-73–Ile-93, and Asn-96–Ile-116. Active-site residues include Asp-126 and Asp-144. Residues Tyr-135 to Ile-155 traverse the membrane as a helical segment.

This sequence belongs to the peptidase A8 family.

Its subcellular location is the cell inner membrane. It carries out the reaction Release of signal peptides from bacterial membrane prolipoproteins. Hydrolyzes -Xaa-Yaa-Zaa-|-(S,diacylglyceryl)Cys-, in which Xaa is hydrophobic (preferably Leu), and Yaa (Ala or Ser) and Zaa (Gly or Ala) have small, neutral side chains.. Its pathway is protein modification; lipoprotein biosynthesis (signal peptide cleavage). This protein specifically catalyzes the removal of signal peptides from prolipoproteins. In Rickettsia akari (strain Hartford), this protein is Lipoprotein signal peptidase.